The following is a 459-amino-acid chain: Cysteine--tRNA ligase (459 aa).

A Zn(2+)-binding site is contributed by Cys29. A 'HIGH' region motif is present at residues 31–41 (MTVYDLCHLGH). Residues Cys213, His238, and Glu242 each contribute to the Zn(2+) site. The short motif at 270–274 (KMSKS) is the 'KMSKS' region element. Position 273 (Lys273) interacts with ATP.

It belongs to the class-I aminoacyl-tRNA synthetase family. In terms of assembly, monomer. Requires Zn(2+) as cofactor.

It localises to the cytoplasm. It catalyses the reaction tRNA(Cys) + L-cysteine + ATP = L-cysteinyl-tRNA(Cys) + AMP + diphosphate. In Variovorax paradoxus (strain S110), this protein is Cysteine--tRNA ligase.